The chain runs to 1195 residues: Error-prone DNA polymerase (1195 aa).

The segment at 1163–1195 is disordered; that stretch reads ALNGDRRDTPDAPAQRHRHPRDVRILPPSRDFH.

This sequence belongs to the DNA polymerase type-C family. DnaE2 subfamily.

It is found in the cytoplasm. It carries out the reaction DNA(n) + a 2'-deoxyribonucleoside 5'-triphosphate = DNA(n+1) + diphosphate. In terms of biological role, DNA polymerase involved in damage-induced mutagenesis and translesion synthesis (TLS). It is not the major replicative DNA polymerase. This chain is Error-prone DNA polymerase, found in Rhodopseudomonas palustris (strain ATCC BAA-98 / CGA009).